Consider the following 437-residue polypeptide: Adenylosuccinate synthetase (437 aa).

Residues 12 to 18 and 40 to 42 each bind GTP; these read GDEGKGK and GHT. Residue D13 is the Proton acceptor of the active site. Mg(2+)-binding residues include D13 and G40. IMP contacts are provided by residues 13–16, 38–41, T128, R142, Q223, T238, and R302; these read DEGK and NAGH. The Proton donor role is filled by H41. Substrate is bound at residue 298-304; that stretch reads TTTGRRR. Residues R304, 330-332, and 412-414 contribute to the GTP site; these read KLD and SLG.

The protein belongs to the adenylosuccinate synthetase family. In terms of assembly, homodimer. Mg(2+) serves as cofactor.

Its subcellular location is the cytoplasm. It catalyses the reaction IMP + L-aspartate + GTP = N(6)-(1,2-dicarboxyethyl)-AMP + GDP + phosphate + 2 H(+). Its pathway is purine metabolism; AMP biosynthesis via de novo pathway; AMP from IMP: step 1/2. Functionally, plays an important role in the de novo pathway of purine nucleotide biosynthesis. Catalyzes the first committed step in the biosynthesis of AMP from IMP. This Parasynechococcus marenigrum (strain WH8102) protein is Adenylosuccinate synthetase.